A 617-amino-acid polypeptide reads, in one-letter code: Putative type VI secretion system protein VgrGA (617 aa).

Disordered regions lie at residues 325–344 (GQQP…TLSN) and 449–469 (RTFH…TRTS).

Belongs to the VgrG protein family.

In terms of biological role, a Vgr protein that is probably part of a type VI secretion system (T6SS). May be required for export of proteins involved in Rhs-mediated cellular contact-dependent growth inhibition (CDI). The protein is Putative type VI secretion system protein VgrGA (vgrGA) of Dickeya dadantii (strain 3937) (Erwinia chrysanthemi (strain 3937)).